Consider the following 460-residue polypeptide: Mercuric reductase (460 aa).

Positions 1 to 65 (MTHLKITGMT…AVAGLGYKAM (65 aa)) constitute an HMA domain. Residues C11 and C14 each coordinate a metal cation. 3 residues coordinate FAD: A110, G130, and T135. C136 and C141 are joined by a disulfide. Residues K145 and A211 each coordinate FAD. C457 and C458 together coordinate Hg(2+).

Belongs to the class-I pyridine nucleotide-disulfide oxidoreductase family. Homodimer. It depends on FAD as a cofactor.

The catalysed reaction is Hg + NADP(+) + H(+) = Hg(2+) + NADPH. Functionally, resistance to Hg(2+) in bacteria appears to be governed by a specialized system which includes mercuric reductase. MerA protein is responsible for volatilizing mercury as Hg(0). This Serratia marcescens protein is Mercuric reductase (merA).